Reading from the N-terminus, the 250-residue chain is Cell division protein ZapD (250 aa).

This sequence belongs to the ZapD family. Interacts with FtsZ.

It localises to the cytoplasm. In terms of biological role, cell division factor that enhances FtsZ-ring assembly. Directly interacts with FtsZ and promotes bundling of FtsZ protofilaments, with a reduction in FtsZ GTPase activity. This chain is Cell division protein ZapD, found in Yersinia pseudotuberculosis serotype O:1b (strain IP 31758).